A 359-amino-acid chain; its full sequence is Hyaluronan and proteoglycan link protein 3 (359 aa).

The N-terminal stretch at 1–17 (MSLLFLVLLSPFPCVLG) is a signal peptide. The 117-residue stretch at 48–164 (KLVVETTEES…ESGLVELELR (117 aa)) folds into the Ig-like V-type domain. 5 cysteine pairs are disulfide-bonded: Cys70–Cys146, Cys188–Cys259, Cys212–Cys233, Cys286–Cys355, and Cys311–Cys332. Link domains are found at residues 166-261 (VVFP…FCFA) and 266-357 (GRVY…YCYV).

It belongs to the HAPLN family.

The protein localises to the secreted. Its subcellular location is the extracellular space. It localises to the extracellular matrix. Its function is as follows. May function in hyaluronic acid binding. This is Hyaluronan and proteoglycan link protein 3 (Hapln3) from Mus musculus (Mouse).